A 494-amino-acid chain; its full sequence is MANYFNTLNLRQQLEQLGKCRFMNRDEFASECDFLKGKKVVIVGCGAQGLNQGLNMRDSGLDVSYALRAEAIAEKRKSFKQASENGFTVGTYEDLIPTADLVVNLTPDKQHTSVVKAVMPLMKDGAALGYSHGFNIVEEGTQIRKDITVVMVAPKCPGTEVREEYKRGFGVPTLIAVHPENDPKGDGLAIAKAWAAATGGHRAGVLQSSFVAEVKSDLMGEQTILCGMLQAGSILCYEKMIADGIDAGYAGKLIQFGWETITEALKQGGITAMMDRLSNPAKLRAFELAEEMRVLMRPLFRKHQDDIISGAFSSGMMADWANNDADLFRWREETGASAFENAPAFDGAIAEQEYFDNGILMVAMVKAGVELAFETMTESGIIAESAYYESLHELPLIANTIARKRLYEMNVVISDTAEYGNYLFANAAVPLLKAHIMPKVGTDVIGKTLSVKDNGVDNVTLVQVNEIIRNHPIEQVGKVLRGYMKDMKRIAVGG.

The KARI N-terminal Rossmann domain occupies 14–208 (LEQLGKCRFM…GGHRAGVLQS (195 aa)). NADP(+) contacts are provided by residues 45–48 (CGAQ), Arg68, Arg76, Ser78, and 108–110 (DKQ). The active site involves His132. Gly158 contributes to the NADP(+) binding site. KARI C-terminal knotted domains lie at 209–344 (SFVA…NAPA) and 345–487 (FDGA…MKDM). The Mg(2+) site is built by Asp217, Glu221, Glu389, and Glu393. Ser414 contacts substrate.

It belongs to the ketol-acid reductoisomerase family. Mg(2+) serves as cofactor.

The catalysed reaction is (2R)-2,3-dihydroxy-3-methylbutanoate + NADP(+) = (2S)-2-acetolactate + NADPH + H(+). It catalyses the reaction (2R,3R)-2,3-dihydroxy-3-methylpentanoate + NADP(+) = (S)-2-ethyl-2-hydroxy-3-oxobutanoate + NADPH + H(+). It participates in amino-acid biosynthesis; L-isoleucine biosynthesis; L-isoleucine from 2-oxobutanoate: step 2/4. The protein operates within amino-acid biosynthesis; L-valine biosynthesis; L-valine from pyruvate: step 2/4. Involved in the biosynthesis of branched-chain amino acids (BCAA). Catalyzes an alkyl-migration followed by a ketol-acid reduction of (S)-2-acetolactate (S2AL) to yield (R)-2,3-dihydroxy-isovalerate. In the isomerase reaction, S2AL is rearranged via a Mg-dependent methyl migration to produce 3-hydroxy-3-methyl-2-ketobutyrate (HMKB). In the reductase reaction, this 2-ketoacid undergoes a metal-dependent reduction by NADPH to yield (R)-2,3-dihydroxy-isovalerate. The chain is Ketol-acid reductoisomerase (NADP(+)) from Tolumonas auensis (strain DSM 9187 / NBRC 110442 / TA 4).